Consider the following 261-residue polypeptide: Cytochrome c oxidase subunit 3 (261 aa).

At 1–15 the chain is on the mitochondrial matrix side; that stretch reads MTHQTHAYHMVNPSP. Residues 16–34 traverse the membrane as a helical segment; the sequence is WPLTGALSALLMTSGLIMW. Over 35 to 40 the chain is Mitochondrial intermembrane; sequence FHYNSM. The helical transmembrane segment at 41 to 66 threads the bilayer; the sequence is ALLTLGFTTNLLTMYQWWRDVIREGT. The Mitochondrial matrix segment spans residues 67-72; the sequence is FQGHHT. Residues 73-105 form a helical membrane-spanning segment; it reads PIVQKGLRYGMVLFIVSEVFFFAGFFWAFYHSS. The Mitochondrial intermembrane portion of the chain corresponds to 106-128; that stretch reads LAPTPELGGCWPPTGIIPLNPLE. A helical membrane pass occupies residues 129–152; that stretch reads VPLLNTSVLLASGVSITWAHHSLM. Over 153–155 the chain is Mitochondrial matrix; the sequence is EGN. The chain crosses the membrane as a helical span at residues 156-183; that stretch reads RKHMLQALFITISLGVYFTLLQASEYYE. Residues 184–190 are Mitochondrial intermembrane-facing; it reads TSFTISD. Residues 191–223 form a helical membrane-spanning segment; it reads GVYGSTFFMATGFHGLHVIIGSTFLIVCFLRQL. The Mitochondrial matrix portion of the chain corresponds to 224–232; that stretch reads YYHFTSNHH. Residues 233-256 form a helical membrane-spanning segment; it reads FGFEAAAWYWHFVDVVWLFLYVSI. Over 257–261 the chain is Mitochondrial intermembrane; sequence YWWGS.

The protein belongs to the cytochrome c oxidase subunit 3 family. As to quaternary structure, component of the cytochrome c oxidase (complex IV, CIV), a multisubunit enzyme composed of 14 subunits. The complex is composed of a catalytic core of 3 subunits MT-CO1, MT-CO2 and MT-CO3, encoded in the mitochondrial DNA, and 11 supernumerary subunits COX4I, COX5A, COX5B, COX6A, COX6B, COX6C, COX7A, COX7B, COX7C, COX8 and NDUFA4, which are encoded in the nuclear genome. The complex exists as a monomer or a dimer and forms supercomplexes (SCs) in the inner mitochondrial membrane with NADH-ubiquinone oxidoreductase (complex I, CI) and ubiquinol-cytochrome c oxidoreductase (cytochrome b-c1 complex, complex III, CIII), resulting in different assemblies (supercomplex SCI(1)III(2)IV(1) and megacomplex MCI(2)III(2)IV(2)).

The protein localises to the mitochondrion inner membrane. The enzyme catalyses 4 Fe(II)-[cytochrome c] + O2 + 8 H(+)(in) = 4 Fe(III)-[cytochrome c] + 2 H2O + 4 H(+)(out). Component of the cytochrome c oxidase, the last enzyme in the mitochondrial electron transport chain which drives oxidative phosphorylation. The respiratory chain contains 3 multisubunit complexes succinate dehydrogenase (complex II, CII), ubiquinol-cytochrome c oxidoreductase (cytochrome b-c1 complex, complex III, CIII) and cytochrome c oxidase (complex IV, CIV), that cooperate to transfer electrons derived from NADH and succinate to molecular oxygen, creating an electrochemical gradient over the inner membrane that drives transmembrane transport and the ATP synthase. Cytochrome c oxidase is the component of the respiratory chain that catalyzes the reduction of oxygen to water. Electrons originating from reduced cytochrome c in the intermembrane space (IMS) are transferred via the dinuclear copper A center (CU(A)) of subunit 2 and heme A of subunit 1 to the active site in subunit 1, a binuclear center (BNC) formed by heme A3 and copper B (CU(B)). The BNC reduces molecular oxygen to 2 water molecules using 4 electrons from cytochrome c in the IMS and 4 protons from the mitochondrial matrix. This is Cytochrome c oxidase subunit 3 (MT-CO3) from Canis lupus familiaris (Dog).